A 338-amino-acid chain; its full sequence is Nickel transporter NixA (338 aa).

Helical transmembrane passes span 11-31 (WLPYIAIVILLHVIGFSFLWI), 37-57 (HILFGMGILAYTLGLRHAFDA), 79-99 (GVGFYFSIGHSSVVFLMAVFL), 127-147 (FFLVLIGVLNLIILISLINLF), 187-207 (VLPLGFLFGLGFDTASEIALL), 217-237 (AISFIGILSLPILFASGMSLL), 266-286 (ITAISVMAALVIGMIELLQIL), and 307-327 (YLGYILVALFLITWLISSLIW).

Belongs to the NiCoT transporter (TC 2.A.52) family.

Its subcellular location is the cell membrane. Functionally, secondary nickel transporter. Required for full urease activity. This Staphylococcus aureus (strain NCTC 8325 / PS 47) protein is Nickel transporter NixA.